The chain runs to 35 residues: Dermonecrotic toxin LrSicTox-alphaI-1 (35 aa).

Residue His-11 is part of the active site. Residue Asp-33 participates in Mg(2+) binding.

It belongs to the arthropod phospholipase D family. Class II subfamily. It depends on Mg(2+) as a cofactor. In terms of processing, contains 2 disulfide bonds. Expressed by the venom gland.

Its subcellular location is the secreted. The catalysed reaction is an N-(acyl)-sphingosylphosphocholine = an N-(acyl)-sphingosyl-1,3-cyclic phosphate + choline. It catalyses the reaction an N-(acyl)-sphingosylphosphoethanolamine = an N-(acyl)-sphingosyl-1,3-cyclic phosphate + ethanolamine. The enzyme catalyses a 1-acyl-sn-glycero-3-phosphocholine = a 1-acyl-sn-glycero-2,3-cyclic phosphate + choline. It carries out the reaction a 1-acyl-sn-glycero-3-phosphoethanolamine = a 1-acyl-sn-glycero-2,3-cyclic phosphate + ethanolamine. Functionally, dermonecrotic toxins cleave the phosphodiester linkage between the phosphate and headgroup of certain phospholipids (sphingolipid and lysolipid substrates), forming an alcohol (often choline) and a cyclic phosphate. This toxin acts on sphingomyelin (SM). It may also act on ceramide phosphoethanolamine (CPE), lysophosphatidylcholine (LPC) and lysophosphatidylethanolamine (LPE), but not on lysophosphatidylserine (LPS), and lysophosphatidylglycerol (LPG). It acts by transphosphatidylation, releasing exclusively cyclic phosphate products as second products. Induces dermonecrosis, hemolysis, increased vascular permeability, edema, inflammatory response, and platelet aggregation. This chain is Dermonecrotic toxin LrSicTox-alphaI-1, found in Loxosceles reclusa (Brown recluse spider).